Consider the following 306-residue polypeptide: D-alanine--D-alanine ligase (306 aa).

One can recognise an ATP-grasp domain in the interval 102–300 (KIIAASAGVS…YGDIVKWIVE (199 aa)). 128 to 183 (PMKPPYVIKPIREGSSFGVVIVGSDETMPLHDIMNNEWVYDDEIMVEKYVPGRELT) contributes to the ATP binding site. Mg(2+) is bound by residues Asp253, Glu267, and Asn269.

Belongs to the D-alanine--D-alanine ligase family. It depends on Mg(2+) as a cofactor. The cofactor is Mn(2+).

Its subcellular location is the cytoplasm. It carries out the reaction 2 D-alanine + ATP = D-alanyl-D-alanine + ADP + phosphate + H(+). Its pathway is cell wall biogenesis; peptidoglycan biosynthesis. Its function is as follows. Cell wall formation. This chain is D-alanine--D-alanine ligase, found in Bartonella bacilliformis (strain ATCC 35685 / KC583 / Herrer 020/F12,63).